The primary structure comprises 334 residues: Aspartate carbamoyltransferase catalytic subunit (334 aa).

Positions 71 and 72 each coordinate carbamoyl phosphate. L-aspartate is bound at residue Lys-99. Positions 121, 151, and 154 each coordinate carbamoyl phosphate. Arg-184 and Arg-239 together coordinate L-aspartate. Carbamoyl phosphate-binding residues include Gly-280 and Pro-281.

The protein belongs to the aspartate/ornithine carbamoyltransferase superfamily. ATCase family. Heterododecamer (2C3:3R2) of six catalytic PyrB chains organized as two trimers (C3), and six regulatory PyrI chains organized as three dimers (R2).

The enzyme catalyses carbamoyl phosphate + L-aspartate = N-carbamoyl-L-aspartate + phosphate + H(+). It functions in the pathway pyrimidine metabolism; UMP biosynthesis via de novo pathway; (S)-dihydroorotate from bicarbonate: step 2/3. Functionally, catalyzes the condensation of carbamoyl phosphate and aspartate to form carbamoyl aspartate and inorganic phosphate, the committed step in the de novo pyrimidine nucleotide biosynthesis pathway. The polypeptide is Aspartate carbamoyltransferase catalytic subunit (Pseudomonas putida (strain ATCC 47054 / DSM 6125 / CFBP 8728 / NCIMB 11950 / KT2440)).